A 304-amino-acid polypeptide reads, in one-letter code: Acetyl-coenzyme A carboxylase carboxyl transferase subunit beta (304 aa).

The CoA carboxyltransferase N-terminal domain occupies 23 to 292; the sequence is VWTKCDSCGQ…PNPDAPREGV (270 aa). Cys27, Cys30, Cys46, and Cys49 together coordinate Zn(2+). A C4-type zinc finger spans residues 27–49; that stretch reads CDSCGQVLYRAELERNLEVCPKC. The interval 283–304 is disordered; it reads PNPDAPREGVVVPPAPDQESEA.

Belongs to the AccD/PCCB family. As to quaternary structure, acetyl-CoA carboxylase is a heterohexamer composed of biotin carboxyl carrier protein (AccB), biotin carboxylase (AccC) and two subunits each of ACCase subunit alpha (AccA) and ACCase subunit beta (AccD). Zn(2+) serves as cofactor.

It is found in the cytoplasm. The catalysed reaction is N(6)-carboxybiotinyl-L-lysyl-[protein] + acetyl-CoA = N(6)-biotinyl-L-lysyl-[protein] + malonyl-CoA. It functions in the pathway lipid metabolism; malonyl-CoA biosynthesis; malonyl-CoA from acetyl-CoA: step 1/1. Its function is as follows. Component of the acetyl coenzyme A carboxylase (ACC) complex. Biotin carboxylase (BC) catalyzes the carboxylation of biotin on its carrier protein (BCCP) and then the CO(2) group is transferred by the transcarboxylase to acetyl-CoA to form malonyl-CoA. This chain is Acetyl-coenzyme A carboxylase carboxyl transferase subunit beta, found in Salmonella agona (strain SL483).